The chain runs to 310 residues: MDRKELLSRPVRDLSITADTRLGDLMDQFSSIGGFTAAKIHEAYEIIKDMFSEDNTTFLSFPADIISTGLRGLINEVVKRKLVDVIITTSGTLDHDIARTYRNYYCGSFSYSDIELRDLGINRLGNVLVPDESYGEIIEEKVMESLEKLYAKKKEWATVDLIHEVGLDINSESSIIYNAAKNNIPVFVPGITDGSFGSQLWSFYEQHHDFKINLLEDEHRLSDIIFDAKKTGAIMIGGGISKHHTIWWNQFRDGLDYAVYVTTAQEYDGSLSGAKLEEAISWKKVRPDARYVNVYGDATVIMPVLLAPFL.

Catalysis depends on K284, which acts as the Nucleophile.

This sequence belongs to the deoxyhypusine synthase family. Requires NAD(+) as cofactor.

The catalysed reaction is [eIF5A protein]-L-lysine + spermidine = [eIF5A protein]-deoxyhypusine + propane-1,3-diamine. The protein operates within protein modification; eIF5A hypusination. Functionally, catalyzes the NAD-dependent oxidative cleavage of spermidine and the subsequent transfer of the butylamine moiety of spermidine to the epsilon-amino group of a specific lysine residue of the eIF-5A precursor protein to form the intermediate deoxyhypusine residue. The polypeptide is Probable deoxyhypusine synthase (dys) (Thermoplasma acidophilum (strain ATCC 25905 / DSM 1728 / JCM 9062 / NBRC 15155 / AMRC-C165)).